Reading from the N-terminus, the 203-residue chain is MAGKSSNGDGVKFADDAGSGNSIDGIAIIDPGTVTSASGGSGSDAGSGDSGNTPRKRGRPAGSGTGAKRGRPAGNSAAKKVPGNLGVEKILFSLHLMASSALKVEELALDEKEAEALAGAVQEVASHYDITPDPKIMAWAGLFGVCASIYGPRVAAYKMRAAAEKRDKKEAAKPMAQKVQEAKPTEHDPAAPYIEQLPVSNTL.

Disordered regions lie at residues 1–80 (MAGK…AAKK) and 166–203 (RDKK…SNTL). Positions 39-49 (GGSGSDAGSGD) are enriched in gly residues. Residues 180-189 (QEAKPTEHDP) show a composition bias toward basic and acidic residues.

Its function is as follows. Assembly protein. The major coat protein P3 and two assembly factors (P10 and P17) are needed during the assembly of the virus particle inside the host cell, when the capsid protein multimers are capable of enclosing the host-derived membrane, containing the virus-encoded membrane-associated proteins. The sequence is that of Protein P10 (X) from Acinetobacter calcoaceticus (Arthrobacter siderocapsulatus).